A 173-amino-acid chain; its full sequence is Translation initiation factor IF-3 (173 aa).

This sequence belongs to the IF-3 family. In terms of assembly, monomer.

It is found in the cytoplasm. Its function is as follows. IF-3 binds to the 30S ribosomal subunit and shifts the equilibrium between 70S ribosomes and their 50S and 30S subunits in favor of the free subunits, thus enhancing the availability of 30S subunits on which protein synthesis initiation begins. In Phenylobacterium zucineum (strain HLK1), this protein is Translation initiation factor IF-3.